The following is a 326-amino-acid chain: Eukaryotic translation initiation factor 3 subunit I (326 aa).

WD repeat units follow at residues 8-47, 50-89, 145-184, 188-227, and 285-326; these read GHER…RLGT, GHQG…VIAS, MTES…KVVD, DHSA…CLKT, and GHFG…NIFE.

It belongs to the eIF-3 subunit I family. In terms of assembly, component of the eukaryotic translation initiation factor 3 (eIF-3) complex. The eIF-3 complex interacts with pix.

Its subcellular location is the cytoplasm. Component of the eukaryotic translation initiation factor 3 (eIF-3) complex, which is involved in protein synthesis of a specialized repertoire of mRNAs and, together with other initiation factors, stimulates binding of mRNA and methionyl-tRNAi to the 40S ribosome. The eIF-3 complex specifically targets and initiates translation of a subset of mRNAs involved in cell proliferation. This chain is Eukaryotic translation initiation factor 3 subunit I, found in Drosophila erecta (Fruit fly).